Reading from the N-terminus, the 171-residue chain is UPF0312 protein MW2606 (171 aa).

It belongs to the UPF0312 family.

This is UPF0312 protein MW2606 from Staphylococcus aureus (strain MW2).